The following is a 552-amino-acid chain: Elongator complex protein 3 (552 aa).

In terms of domain architecture, Radical SAM core spans 84–374 (RTASGIAVVA…YRVQRDIPMP (291 aa)). [4Fe-4S] cluster is bound by residues Cys101, Cys111, and Cys114. Acetyl-CoA-binding positions include Lys166, 476–479 (ELHV), 499–501 (FGM), and Tyr532. Residues 398–552 (TTCRDVRTRE…YMSKSIEENN (155 aa)) enclose the N-acetyltransferase domain.

The protein belongs to the ELP3 family. Component of the elongator complex composed of Elp1, Elp2, Elp3, Elp4, Elp5 and Elp6. The elongator complex associates with and stabilizes microtubules; efficient interaction requires the full complex. It depends on [4Fe-4S] cluster as a cofactor.

Its subcellular location is the cytoplasm. It is found in the nucleus. The protein localises to the cytoskeleton. It localises to the spindle. The catalysed reaction is uridine(34) in tRNA + acetyl-CoA + S-adenosyl-L-methionine + H2O = 5-(carboxymethyl)uridine(34) in tRNA + 5'-deoxyadenosine + L-methionine + CoA + 2 H(+). The protein operates within tRNA modification; 5-methoxycarbonylmethyl-2-thiouridine-tRNA biosynthesis. Functionally, catalytic tRNA acetyltransferase subunit of the elongator complex, which is required for multiple tRNA modifications, including mcm5U (5-methoxycarbonylmethyl uridine), mcm5s2U (5-methoxycarbonylmethyl-2-thiouridine), and ncm5U (5-carbamoylmethyl uridine). In the elongator complex, acts as a tRNA uridine(34) acetyltransferase by mediating formation of carboxymethyluridine in the wobble base at position 34 in tRNAs. Binding by the elongator complex stabilizes microtubules and promotes their growth. This induces central spindle asymmetry, promoting polarized signaling endosome trafficking during asymmetric cell division and cell fate assignation of sensory organ precursor cells. Plays a role in the control of synaptic bouton expansion. Required for larval development. Involved in protein synthesis-dependent long-term memory formation, probably as part of the elongator complex. The sequence is that of Elongator complex protein 3 from Drosophila melanogaster (Fruit fly).